The primary structure comprises 123 residues: Fluoride-specific ion channel FluC (123 aa).

A run of 4 helical transmembrane segments spans residues 4–24 (VYIA…SGWV), 31–51 (ALPY…GLLM), 64–83 (IRMG…STFS), and 100–120 (ANIL…IFLA). Na(+) contacts are provided by Gly74 and Thr77.

It belongs to the fluoride channel Fluc/FEX (TC 1.A.43) family.

The protein resides in the cell inner membrane. It catalyses the reaction fluoride(in) = fluoride(out). Its activity is regulated as follows. Na(+) is not transported, but it plays an essential structural role and its presence is essential for fluoride channel function. Its function is as follows. Fluoride-specific ion channel. Important for reducing fluoride concentration in the cell, thus reducing its toxicity. This Syntrophotalea carbinolica (strain DSM 2380 / NBRC 103641 / GraBd1) (Pelobacter carbinolicus) protein is Fluoride-specific ion channel FluC.